The sequence spans 305 residues: Peroxisome assembly protein 26 (305 aa).

The Cytoplasmic portion of the chain corresponds to 1–246 (MKSDASTSAA…RRLWGSVVSH (246 aa)). Residues 247 to 267 (LLSQPFRKGLLAALILCLLIL) traverse the membrane as a helical; Signal-anchor for type II membrane protein segment. At 268–305 (RFDPAAPSSLPFLYQLTQLFRRIQKATLSRLYPLALRD) the chain is on the peroxisomal matrix side.

It belongs to the peroxin-26 family. In terms of assembly, interacts (via its cytoplasmic domain) with PEX6; interaction is direct and is ATP-dependent. Interacts with PEX1; interaction is indirect and is mediated via interaction with PEX6.

Its subcellular location is the peroxisome membrane. In terms of biological role, peroxisomal docking factor that anchors PEX1 and PEX6 to peroxisome membranes. PEX26 is therefore required for the formation of the PEX1-PEX6 AAA ATPase complex, a complex that mediates the extraction of the PEX5 receptor from peroxisomal membrane. This chain is Peroxisome assembly protein 26, found in Mus musculus (Mouse).